The chain runs to 329 residues: Prostaglandin reductase 1 (329 aa).

Threonine 18 bears the Phosphothreonine mark. A Phosphoserine modification is found at serine 20. NADP(+)-binding positions include 152-155 (GAVG), lysine 178, tyrosine 193, asparagine 217, 239-245 (CGAISTY), 270-272 (FVV), and asparagine 321. Position 178 is an N6-(2-hydroxyisobutyryl)lysine; alternate (lysine 178). Lysine 178 carries the N6-acetyllysine; alternate modification.

It belongs to the NADP-dependent oxidoreductase L4BD family. Monomer or homodimer. High expression in the kidney, liver, and intestine but not in leukocytes.

It is found in the cytoplasm. It catalyses the reaction 13,14-dihydro-15-oxo-prostaglandin E1 + NADP(+) = 15-oxoprostaglandin E1 + NADPH + H(+). The catalysed reaction is 13,14-dihydro-15-oxo-prostaglandin E2 + NADP(+) = 15-oxoprostaglandin E2 + NADPH + H(+). The enzyme catalyses 13,14-dihydro-15-oxo-prostaglandin F1alpha + NADP(+) = 15-oxoprostaglandin F1alpha + NADPH + H(+). It carries out the reaction 13,14-dihydro-15-oxo-PGF2alpha + NADP(+) = 15-oxoprostaglandin F2alpha + NADPH + H(+). It catalyses the reaction leukotriene B4 + NADP(+) = 12-oxo-leukotriene B4 + NADPH + H(+). The catalysed reaction is 20-hydroxy-leukotriene B4 + NADP(+) = 12-oxo-20-hydroxy-leukotriene B4 + NADPH + H(+). The enzyme catalyses 6-trans-leukotriene B4 + NADP(+) = 12-oxo-(5S)-hydroxy-(6E,8E,10E,14Z)-eicosatetraenoate + NADPH + H(+). It carries out the reaction (5S,12S)-dihydroxy-(6E,10E,12E,14Z)-eicosatetraenoate + NADP(+) = 12-oxo-(5S)-hydroxy-(6E,8E,10E,14Z)-eicosatetraenoate + NADPH + H(+). It catalyses the reaction an n-alkanal + NADP(+) = an alk-2-enal + NADPH + H(+). The catalysed reaction is hexanal + NADP(+) = (E)-hex-2-enal + NADPH + H(+). The enzyme catalyses octanal + NADP(+) = (2E)-octenal + NADPH + H(+). It carries out the reaction decanal + NADP(+) = (2E)-decenal + NADPH + H(+). It catalyses the reaction dodecanal + NADP(+) = (2E)-dodecenal + NADPH + H(+). The catalysed reaction is 4-hydroxynonanal + NADP(+) = (E)-4-hydroxynon-2-enal + NADPH + H(+). The enzyme catalyses pentan-2-one + NADP(+) = (E)-pent-3-en-2-one + NADPH + H(+). It carries out the reaction nonan-2-one + NADP(+) = (3E)-nonen-2-one + NADPH + H(+). In terms of biological role, NAD(P)H-dependent oxidoreductase involved in metabolic inactivation of pro- and anti-inflammatory eicosanoids: prostaglandins (PG), leukotrienes (LT) and lipoxins (LX). Catalyzes with high efficiency the reduction of the 13,14 double bond of 15-oxoPGs, including 15-oxo-PGE1, 15-oxo-PGE2, 15-oxo-PGF1-alpha and 15-oxo-PGF2-alpha. Catalyzes with lower efficiency the oxidation of the hydroxyl group at C12 of LTB4 and its derivatives, converting them into biologically less active 12-oxo-LTB4 metabolites. Reduces 15-oxo-LXA4 to 13,14 dihydro-15-oxo-LXA4, enhancing neutrophil recruitment at the inflammatory site. May play a role in metabolic detoxification of alkenals and ketones. Reduces alpha,beta-unsaturated alkenals and ketones, particularly those with medium-chain length, showing highest affinity toward (2E)-decenal and (3E)-3-nonen-2-one. May inactivate 4-hydroxy-2-nonenal, a cytotoxic lipid constituent of oxidized low-density lipoprotein particles. The chain is Prostaglandin reductase 1 (PTGR1) from Homo sapiens (Human).